Consider the following 132-residue polypeptide: MIYGVGTDICDVRRIRASLERHGERLAQKILSEAELATWKERSERWPDRGVRYLATRFSAKEAFSKAIGLGMRMPMTWRHCEISKAASGKPEIVLHGPLKDWFETRQLSVHVSVTDENEYAASFCVVEKNDF.

The Mg(2+) site is built by D8 and E62.

It belongs to the P-Pant transferase superfamily. AcpS family. It depends on Mg(2+) as a cofactor.

The protein resides in the cytoplasm. It carries out the reaction apo-[ACP] + CoA = holo-[ACP] + adenosine 3',5'-bisphosphate + H(+). In terms of biological role, transfers the 4'-phosphopantetheine moiety from coenzyme A to a Ser of acyl-carrier-protein. The polypeptide is Holo-[acyl-carrier-protein] synthase (Polaromonas sp. (strain JS666 / ATCC BAA-500)).